The primary structure comprises 421 residues: ATP-dependent RNA helicase RhlB (421 aa).

The Q motif signature appears at glutamine 9 to alanine 37. The Helicase ATP-binding domain occupies leucine 40–isoleucine 219. Alanine 53–threonine 60 lines the ATP pocket. Residues aspartate 165–aspartate 168 carry the DEAD box motif. One can recognise a Helicase C-terminal domain in the interval arginine 245–methionine 390. Residues aspartate 392–glycine 421 form a disordered region. Over residues proline 402–proline 414 the composition is skewed to low complexity.

This sequence belongs to the DEAD box helicase family. RhlB subfamily. Component of the RNA degradosome, which is a multiprotein complex involved in RNA processing and mRNA degradation.

It is found in the cytoplasm. It catalyses the reaction ATP + H2O = ADP + phosphate + H(+). Its function is as follows. DEAD-box RNA helicase involved in RNA degradation. Has RNA-dependent ATPase activity and unwinds double-stranded RNA. The chain is ATP-dependent RNA helicase RhlB from Escherichia coli O139:H28 (strain E24377A / ETEC).